A 195-amino-acid chain; its full sequence is Iron-sulfur flavoprotein AF_1519 (195 aa).

The [4Fe-4S] cluster site is built by Cys45, Cys48, Cys51, and Cys57.

This sequence belongs to the SsuE family. Isf subfamily. Homodimer. Requires FMN as cofactor. [4Fe-4S] cluster is required as a cofactor.

Redox-active protein probably involved in electron transport. The chain is Iron-sulfur flavoprotein AF_1519 from Archaeoglobus fulgidus (strain ATCC 49558 / DSM 4304 / JCM 9628 / NBRC 100126 / VC-16).